Here is a 62-residue protein sequence, read N- to C-terminus: MKKIEKLTEKEMANIIGGKYYGNGVTCGKHSCSVDWGKATTCIINNGAMAWATGGHQGNHKC.

A propeptide spanning residues 1–18 is cleaved from the precursor; the sequence is MKKIEKLTEKEMANIIGG. Disulfide bonds link Cys-27-Cys-32 and Cys-42-Cys-62. Residues 40–52 form a hydrophobic region; the sequence is TTCIINNGAMAWA.

Belongs to the bacteriocin class IIA/YGNGV family.

The protein localises to the secreted. Functionally, bactericidal activity (effective inhibitor of L.monocytogenes). This chain is Bacteriocin pediocin PA-1 (pedA), found in Pediococcus acidilactici.